The sequence spans 251 residues: Ubiquinone/menaquinone biosynthesis C-methyltransferase UbiE (251 aa).

S-adenosyl-L-methionine-binding positions include Thr-74, Asp-95, and 123-124 (NA).

Belongs to the class I-like SAM-binding methyltransferase superfamily. MenG/UbiE family.

It catalyses the reaction a 2-demethylmenaquinol + S-adenosyl-L-methionine = a menaquinol + S-adenosyl-L-homocysteine + H(+). The enzyme catalyses a 2-methoxy-6-(all-trans-polyprenyl)benzene-1,4-diol + S-adenosyl-L-methionine = a 5-methoxy-2-methyl-3-(all-trans-polyprenyl)benzene-1,4-diol + S-adenosyl-L-homocysteine + H(+). It functions in the pathway quinol/quinone metabolism; menaquinone biosynthesis; menaquinol from 1,4-dihydroxy-2-naphthoate: step 2/2. The protein operates within cofactor biosynthesis; ubiquinone biosynthesis. Methyltransferase required for the conversion of demethylmenaquinol (DMKH2) to menaquinol (MKH2) and the conversion of 2-polyprenyl-6-methoxy-1,4-benzoquinol (DDMQH2) to 2-polyprenyl-3-methyl-6-methoxy-1,4-benzoquinol (DMQH2). This Shewanella frigidimarina (strain NCIMB 400) protein is Ubiquinone/menaquinone biosynthesis C-methyltransferase UbiE.